The sequence spans 321 residues: Bifunctional methyltransferase/endonuclease (321 aa).

Residues methionine 1 to arginine 86 form a probable methylated-DNA--protein-cysteine methyltransferase region. Cysteine 61 is a catalytic residue. Residues leucine 87–isoleucine 318 are endonuclease V. Mg(2+)-binding residues include aspartate 145 and aspartate 204.

The protein in the N-terminal section; belongs to the MGMT family. In the C-terminal section; belongs to the endonuclease V family. Requires Mg(2+) as cofactor.

The protein localises to the cytoplasm. The catalysed reaction is Endonucleolytic cleavage at apurinic or apyrimidinic sites to products with a 5'-phosphate.. DNA repair enzyme involved in the repair of deaminated bases. Selectively cleaves double-stranded DNA at the second phosphodiester bond 3' to a deoxyinosine leaving behind the intact lesion on the nicked DNA. In Thermoplasma volcanium (strain ATCC 51530 / DSM 4299 / JCM 9571 / NBRC 15438 / GSS1), this protein is Bifunctional methyltransferase/endonuclease.